Reading from the N-terminus, the 61-residue chain is Small ribosomal subunit protein uS14B (61 aa).

Zn(2+) contacts are provided by C24, C27, C40, and C43.

It belongs to the universal ribosomal protein uS14 family. Zinc-binding uS14 subfamily. As to quaternary structure, part of the 30S ribosomal subunit. Contacts proteins S3 and S10. The cofactor is Zn(2+).

Binds 16S rRNA, required for the assembly of 30S particles and may also be responsible for determining the conformation of the 16S rRNA at the A site. This is Small ribosomal subunit protein uS14B from Nocardia farcinica (strain IFM 10152).